Reading from the N-terminus, the 328-residue chain is uncharacterized protein (328 aa).

Belongs to the Gfo/Idh/MocA family.

This is an uncharacterized protein from Escherichia coli (strain K12).